Here is a 316-residue protein sequence, read N- to C-terminus: Mycothiol acetyltransferase (316 aa).

N-acetyltransferase domains are found at residues 16-153 and 156-316; these read REVR…VPAV and VRIR…PAAN. Glu-36 contacts 1D-myo-inositol 2-(L-cysteinylamino)-2-deoxy-alpha-D-glucopyranoside. Acetyl-CoA is bound by residues 83-85 and 91-96; these read LVV and RRGIGS. Glu-183, Lys-228, and Glu-238 together coordinate 1D-myo-inositol 2-(L-cysteinylamino)-2-deoxy-alpha-D-glucopyranoside. Residues 242–244 and 249–255 contribute to the acetyl-CoA site; these read VGV and QGRGLGQ. Residue Tyr-283 participates in 1D-myo-inositol 2-(L-cysteinylamino)-2-deoxy-alpha-D-glucopyranoside binding. Position 288 to 293 (288 to 293) interacts with acetyl-CoA; the sequence is NVAAVR.

The protein belongs to the acetyltransferase family. MshD subfamily. As to quaternary structure, monomer.

It carries out the reaction 1D-myo-inositol 2-(L-cysteinylamino)-2-deoxy-alpha-D-glucopyranoside + acetyl-CoA = mycothiol + CoA + H(+). Its function is as follows. Catalyzes the transfer of acetyl from acetyl-CoA to desacetylmycothiol (Cys-GlcN-Ins) to form mycothiol. The sequence is that of Mycothiol acetyltransferase from Mycobacterium avium (strain 104).